We begin with the raw amino-acid sequence, 204 residues long: HTH-type transcriptional repressor KstR (204 aa).

The region spanning 18 to 78 is the HTH tetR-type domain; that stretch reads RERRKRILDA…SALGREFERI (61 aa). Positions 41–60 form a DNA-binding region, H-T-H motif; that stretch reads QMRAVAERADVAVGTLYRYF.

As to quaternary structure, homodimer.

Functionally, controls the expression of genes used for utilizing diverse lipids as energy sources. This Mycolicibacterium smegmatis (strain ATCC 700084 / mc(2)155) (Mycobacterium smegmatis) protein is HTH-type transcriptional repressor KstR (kstR).